The sequence spans 358 residues: DNA primase large subunit PriL (358 aa).

Positions 234, 306, 315, and 322 each coordinate [4Fe-4S] cluster. A disordered region spans residues 335–358; sequence KLDDTDEEELVDWREDEGEEEADA. The segment covering 338-358 has biased composition (acidic residues); it reads DTDEEELVDWREDEGEEEADA.

The protein belongs to the eukaryotic-type primase large subunit family. Heterodimer of a small subunit (PriS) and a large subunit (PriL). [4Fe-4S] cluster is required as a cofactor.

Regulatory subunit of DNA primase, an RNA polymerase that catalyzes the synthesis of short RNA molecules used as primers for DNA polymerase during DNA replication. Stabilizes and modulates the activity of the small subunit, increasing the rate of DNA synthesis, and conferring RNA synthesis capability. The DNA polymerase activity may enable DNA primase to also catalyze primer extension after primer synthesis. May also play a role in DNA repair. The protein is DNA primase large subunit PriL of Haloarcula marismortui (strain ATCC 43049 / DSM 3752 / JCM 8966 / VKM B-1809) (Halobacterium marismortui).